Consider the following 642-residue polypeptide: Threonine--tRNA ligase (642 aa).

The TGS domain maps to 1-58 (MQVAGKELEVQQGALCGEVLKEALSKKQFKNVVVAKCGDTLLDLTTTVPADCTDLEPV). The interval 239–530 (DHRKLGTQLD…LLEHTGGALP (292 aa)) is catalytic. Cysteine 331, histidine 382, and histidine 507 together coordinate Zn(2+).

The protein belongs to the class-II aminoacyl-tRNA synthetase family. As to quaternary structure, homodimer. Zn(2+) serves as cofactor.

Its subcellular location is the cytoplasm. It catalyses the reaction tRNA(Thr) + L-threonine + ATP = L-threonyl-tRNA(Thr) + AMP + diphosphate + H(+). In terms of biological role, catalyzes the attachment of threonine to tRNA(Thr) in a two-step reaction: L-threonine is first activated by ATP to form Thr-AMP and then transferred to the acceptor end of tRNA(Thr). Also edits incorrectly charged L-seryl-tRNA(Thr). This chain is Threonine--tRNA ligase, found in Maridesulfovibrio salexigens (strain ATCC 14822 / DSM 2638 / NCIMB 8403 / VKM B-1763) (Desulfovibrio salexigens).